We begin with the raw amino-acid sequence, 599 residues long: MATLACVGAAAMACALAVYLGDTTKSMSYLSYSGTILFGCSGLWYVWKGLLWPAYFSPLRHLKTVPKSGWLSAETLRLYTEPRGVPQCEWINKLDSVPQGLVRYRSILGFERLLVVSPEALADVLVNRSYEFQKPAFVVTQLEQILGRGVLLAEGNEHRAQRRVLLPAFAFRHVKSLYPVMWSVAEHLITSMTENIRVESSASPTEPVFSSDEPQAKHKHEMITVNIADLCSRATLDIIGIAGIGQEFGAIRNPNNALHQTYCEIFQPSKEATLLGVLRLLLPIWFVDWLPSRRNARVQRAVQTIRSLCRQIIQEERLPQAVDESHSEVASTGKNILTLAIASGAFTDEALVDQIMTFLAAGHETTATALTWAIYIMCLHPGIQEKLRNEVRSRLPKLPSTYNSAPQNLAKTIDTGMPYLNAVCQEVFRYFPPIPVTFREATKNTFILNTAVPAGTKIVLAPRVTNRQSTLWGSNAQEFDPDRWLCLKKQDASIDDSSAASPSFGGSGKRKSQYTDTHKEPSTRSNFATMTFLHGPRSCIGQSFAKAELAILLAALVGRFEFKLARGTPEKEIDVRVSRGATARPEKGLFVQIRVIEGW.

2 helical membrane-spanning segments follow: residues 4–21 (LACV…VYLG) and 36–56 (ILFG…PAYF). N127 is a glycosylation site (N-linked (GlcNAc...) asparagine). Residues 495–504 (DDSSAASPSF) are compositionally biased toward low complexity. Residues 495-522 (DDSSAASPSFGGSGKRKSQYTDTHKEPS) form a disordered region. Position 539 (C539) interacts with heme.

It belongs to the cytochrome P450 family. Heme serves as cofactor.

The protein resides in the membrane. It participates in secondary metabolite biosynthesis. Functionally, cytochrome P450 monooxygenase; part of the gene cluster that mediates the biosynthesis of the host-selective toxins (HSTs) AAL-toxins, sphinganine-analog mycotoxins responsible for Alternaria stem canker on tomato by the tomato pathotype. The biosynthesis starts with the polyketide synthase ALT1-catalyzed C-16 carbon chain assembly from one starter acetyl-CoA unit with malonyl-CoA extender units. ALT1 also selectively transfers methyl groups at the first and the third cycle of chain elongation for AAL toxin. The C-16 polyketide chain is released from the enzyme by a nucleophilic attack of a carbanion, which is derived from R-carbon of glycin by decarboxylation, on the carbonyl carbon of polyketide acyl chain. This step is probably catalyzed by a pyridoxal 5'-phosphate-dependent aminoacyl transferase ALT4. The respective functions of the other enzymes encoded by the cluster have still to be elucidated. The sphingosine N-acyltransferase-like protein ALT7 seems not to act as a resistance/self-tolerance factor against the toxin in the toxin biosynthetic gene cluster, contrary to what is expected. The sequence is that of Cytochrome P450 monooxygenase ALT8 from Alternaria alternata (Alternaria rot fungus).